A 257-amino-acid chain; its full sequence is MAKVTGLPEFEDLHTKRKWMLNHMAAAFRMFGRNGYNEGTAGHVTVRDPIDENTFWINPLEVPFSLMKPSDLVHINSDGEIIGGSKMKYNTSGFAIHYEMHKVRPEVICVCHVHSIYGKAFSALGKPLDMLNTDCCVFYNNHGIYFDMDDVISMPEEGRRTAKGLADYKAVLVQNHGIMTVGTTVDEAAYLLSLMERSCQIQLLIDSATKVGERKHVHPTRAKAIRENADNPVGLYTAQQPNFLYEVACSNGELEII.

It is found in the cytoplasm. It localises to the nucleus. Has a role in meiosis. This is Meiotically up-regulated gene 14 protein (mug14) from Schizosaccharomyces pombe (strain 972 / ATCC 24843) (Fission yeast).